We begin with the raw amino-acid sequence, 258 residues long: Imidazole glycerol phosphate synthase subunit HisF (258 aa).

Residues aspartate 12 and aspartate 131 contribute to the active site.

Belongs to the HisA/HisF family. Heterodimer of HisH and HisF.

It localises to the cytoplasm. It carries out the reaction 5-[(5-phospho-1-deoxy-D-ribulos-1-ylimino)methylamino]-1-(5-phospho-beta-D-ribosyl)imidazole-4-carboxamide + L-glutamine = D-erythro-1-(imidazol-4-yl)glycerol 3-phosphate + 5-amino-1-(5-phospho-beta-D-ribosyl)imidazole-4-carboxamide + L-glutamate + H(+). It participates in amino-acid biosynthesis; L-histidine biosynthesis; L-histidine from 5-phospho-alpha-D-ribose 1-diphosphate: step 5/9. Functionally, IGPS catalyzes the conversion of PRFAR and glutamine to IGP, AICAR and glutamate. The HisF subunit catalyzes the cyclization activity that produces IGP and AICAR from PRFAR using the ammonia provided by the HisH subunit. This chain is Imidazole glycerol phosphate synthase subunit HisF, found in Sinorhizobium fredii (strain NBRC 101917 / NGR234).